We begin with the raw amino-acid sequence, 584 residues long: MTISDHPETEPKWWKEATIYQIYPASFKDSNNDGWGDLKGITSKLQYIKDLGVDAIWVCPFYDSPQQDMGYDISNYEKVWPTYGTNEDCFELIDKTHKLGMKFITDLVINHCSTEHEWFKESRSSKTNPKRDWFFWRPPKGYDAEGKPIPPNNWKSFFGGSAWTFDETTNEFYLRLFASRQVDLNWENEDCRRAIFESAVGFWLDHGVDGFRIDTAGLYSKRPGLPDSPIFDKTSKLQHPNWGSHNGPRIHEYHQELHRFMKNRVKDGREIMTVGEVAHGSDNALYTSAARYEVSEVFSFTHVELGTSPFFRYNIVPFTLKQWKEAIASNFLFINGTDSWATTYIENHDQARSITRFADDSPKYRKISGKLLTLLECSLTGTLYVYQGQEIGQINFKEWPIEKYEDVDVKNNYEIIKKSFGKNSKEMKDFFKGIALLSRDHSRTPMPWTKDKPNAGFTGPDVKPWFFLNESFEQGINVEQESRDDDSVLNFWKRALQARKKYKELMIYGYDFQFIDLDSDQIFSFTKEYEDKTLFAALNFSGEEIEFSLPREGASLSFILGNYDDTDVSSRVLKPWEGRIYLVK.

Aspartate 214 functions as the Nucleophile in the catalytic mechanism. Glutamate 276 (proton donor) is an active-site residue.

It belongs to the glycosyl hydrolase 13 family.

The catalysed reaction is Hydrolysis of terminal, non-reducing (1-&gt;4)-linked alpha-D-glucose residues with release of alpha-D-glucose.. The polypeptide is Alpha-glucosidase MAL32 (MAL32) (Saccharomyces cerevisiae (strain ATCC 204508 / S288c) (Baker's yeast)).